Reading from the N-terminus, the 1209-residue chain is Nitric oxide synthase (1209 aa).

Residue Ser103 coordinates (6R)-L-erythro-5,6,7,8-tetrahydrobiopterin. Cys181 lines the heme b pocket. L-arginine-binding residues include Gln244, Trp353, Tyr354, Glu358, and Asn363. 2 residues coordinate (6R)-L-erythro-5,6,7,8-tetrahydrobiopterin: Trp444 and Phe457. Tyr472 is a binding site for heme b. A calmodulin-binding region spans residues Val491 to Phe511. Residues Ala521–Phe723 form the Flavodoxin-like domain. Thr527–Lys531 contributes to the FMN binding site. The tract at residues Arg603–Ser622 is disordered. Val669 to Leu700 contributes to the FMN binding site. The 246-residue stretch at Lys776–Pro1021 folds into the FAD-binding FR-type domain. FAD is bound by residues Tyr811–Cys822 and Leu954–Ser964. Residues Leu1028–Leu1147 and Asn1128–Val1143 contribute to the NADP(+) site.

It belongs to the NOS family. The cofactor is heme b. Requires FAD as cofactor. FMN is required as a cofactor. Constitutively expressed at a low level in the larval fat body, hemocyte, Malpighian tubule, midgut, silk gland and adult antenna.

The catalysed reaction is 2 L-arginine + 3 NADPH + 4 O2 + H(+) = 2 L-citrulline + 2 nitric oxide + 3 NADP(+) + 4 H2O. Its activity is regulated as follows. Expression is dependent on and stimulated by NADPH, calcium, BH4 and calmodulin. The activity is not dependent on FAD and is not stimulated by its presence. Its function is as follows. Produces nitric oxide (NO) which is a messenger molecule with diverse functions throughout the body. Involved in the induction of immune gene expression. This is Nitric oxide synthase from Bombyx mori (Silk moth).